Reading from the N-terminus, the 269-residue chain is NAD kinase (269 aa).

The active-site Proton acceptor is the Asp-45. NAD(+) is bound by residues 45–46, 122–123, Arg-149, Asp-151, and Ala-186; these read DG and NE.

This sequence belongs to the NAD kinase family. A divalent metal cation serves as cofactor.

It localises to the cytoplasm. It carries out the reaction NAD(+) + ATP = ADP + NADP(+) + H(+). Functionally, involved in the regulation of the intracellular balance of NAD and NADP, and is a key enzyme in the biosynthesis of NADP. Catalyzes specifically the phosphorylation on 2'-hydroxyl of the adenosine moiety of NAD to yield NADP. This Staphylococcus epidermidis (strain ATCC 35984 / DSM 28319 / BCRC 17069 / CCUG 31568 / BM 3577 / RP62A) protein is NAD kinase.